The sequence spans 375 residues: Ferredoxin--NADP reductase, root-type isozyme, chloroplastic (375 aa).

The transit peptide at methionine 1–methionine 60 directs the protein to the chloroplast. Residues lysine 91–leucine 219 enclose the FAD-binding FR-type domain. FAD contacts are provided by residues arginine 151 to leucine 154, cysteine 172 to arginine 174, tyrosine 178, valine 193 to serine 195, and threonine 235. Arginine 174 contacts NADP(+). Residues threonine 235, valine 266–alanine 267, serine 296–arginine 297, lysine 306, glycine 334–leucine 335, and glutamate 373 contribute to the NADP(+) site.

It belongs to the ferredoxin--NADP reductase type 1 family. FAD serves as cofactor.

The protein localises to the plastid. It localises to the chloroplast. The catalysed reaction is 2 reduced [2Fe-2S]-[ferredoxin] + NADP(+) + H(+) = 2 oxidized [2Fe-2S]-[ferredoxin] + NADPH. It functions in the pathway energy metabolism; photosynthesis. Its function is as follows. May play a key role in regulating the relative amounts of cyclic and non-cyclic electron flow to meet the demands of the plant for ATP and reducing power. Is involved in nitrate assimilation. In Nicotiana tabacum (Common tobacco), this protein is Ferredoxin--NADP reductase, root-type isozyme, chloroplastic.